We begin with the raw amino-acid sequence, 365 residues long: Cobalt-precorrin-5B C(1)-methyltransferase (365 aa).

Belongs to the CbiD family.

It carries out the reaction Co-precorrin-5B + S-adenosyl-L-methionine = Co-precorrin-6A + S-adenosyl-L-homocysteine. Its pathway is cofactor biosynthesis; adenosylcobalamin biosynthesis; cob(II)yrinate a,c-diamide from sirohydrochlorin (anaerobic route): step 6/10. Functionally, catalyzes the methylation of C-1 in cobalt-precorrin-5B to form cobalt-precorrin-6A. The sequence is that of Cobalt-precorrin-5B C(1)-methyltransferase from Clostridium perfringens (strain ATCC 13124 / DSM 756 / JCM 1290 / NCIMB 6125 / NCTC 8237 / Type A).